The primary structure comprises 490 residues: Probable cytosol aminopeptidase (490 aa).

Residues K256 and D261 each coordinate Mn(2+). K268 is a catalytic residue. Positions 280, 340, and 342 each coordinate Mn(2+). The active site involves R344.

The protein belongs to the peptidase M17 family. Requires Mn(2+) as cofactor.

Its subcellular location is the cytoplasm. It catalyses the reaction Release of an N-terminal amino acid, Xaa-|-Yaa-, in which Xaa is preferably Leu, but may be other amino acids including Pro although not Arg or Lys, and Yaa may be Pro. Amino acid amides and methyl esters are also readily hydrolyzed, but rates on arylamides are exceedingly low.. It carries out the reaction Release of an N-terminal amino acid, preferentially leucine, but not glutamic or aspartic acids.. Functionally, presumably involved in the processing and regular turnover of intracellular proteins. Catalyzes the removal of unsubstituted N-terminal amino acids from various peptides. The protein is Probable cytosol aminopeptidase of Prochlorococcus marinus (strain MIT 9313).